Consider the following 52-residue polypeptide: Ornatin-C (52 aa).

Positions 42 to 44 (RGD) match the Cell attachment site motif.

Belongs to the ornatin family.

It is found in the secreted. Potent inhibitor of fibrinogen interaction with platelet receptors expressed on glycoprotein IIb-IIIa complex. May prevent blood from clotting during either feeding and/or storage of ingested blood. The chain is Ornatin-C from Placobdella ornata (Turtle leech).